The following is a 1188-amino-acid chain: Oxysterol-binding protein homolog 1 (1188 aa).

ANK repeat units lie at residues 51-80 (VLHL…STTN), 96-125 (NGNT…INDC), and 196-225 (TGDT…DPFK). In terms of domain architecture, PH spans 330–379 (MSSCSLHLDSSEKLKFEIIGGNNGVIRWHLKGNHPIETNRWVWAIQGAIR). At Ser-394 the chain carries Phosphoserine. 2 disordered regions span residues 415–546 (ATSK…GDED) and 661–692 (QKKL…QEST). Polar residues predominate over residues 424-433 (PHLSKSTLTQ). The span at 443–462 (TNNNNNKSNNDYDDNNNNNN) shows a compositional bias: low complexity. Acidic residues predominate over residues 463 to 473 (NDDDDYDDDDE). Phosphoserine occurs at positions 490 and 500. The segment covering 514–529 (PSDDEGYSEDDSDDDG) has biased composition (acidic residues). Ser-678, Ser-683, and Ser-691 each carry phosphoserine. Phosphothreonine is present on residues Thr-692 and Thr-694. A phosphoserine mark is found at Ser-708 and Ser-712. Positions 716-722 (EFFDAEE) match the FFAT motif. Residues 721-755 (EEAASDKKANDSEDLTTNKETPANAKPQEEAPEDE) form a disordered region. The interval 800-1174 (LWSVLKSMVG…YWKFNGEYWN (375 aa)) is OSBP-related domain (ORD). Ergosterol-binding residues include Asp-834 and Lys-962.

It belongs to the OSBP family. As to quaternary structure, interacts with NVJ1. Interacts with the AAA ATPase AFG2; regulates OSH1 membrane association. AFG2 is required for membrane dissociation of OSH1. Interacts with SCS2.

Its subcellular location is the golgi apparatus membrane. It is found in the nucleus outer membrane. The protein localises to the endoplasmic reticulum membrane. The protein resides in the vacuole membrane. In terms of biological role, lipid transport protein (LTP) involved in non-vesicular transfer of lipids between membranes. Functions in phosphoinositide-coupled directional transport of various lipids by carrying the lipid molecule in a hydrophobic pocket and transferring it between membranes through the cytosol. Involved in maintenance of intracellular sterol distribution and homeostasis. Involved in non-vesicular transport of ergosterol and PI(4)P at the NVJ. Binds sterol and PI4P in a mutually exclusive manner. May be involved in formation of PMN vesicles by altering the membrane lipid composition. The polypeptide is Oxysterol-binding protein homolog 1 (Saccharomyces cerevisiae (strain ATCC 204508 / S288c) (Baker's yeast)).